A 608-amino-acid chain; its full sequence is Thiol:disulfide interchange protein DsbD (608 aa).

Positions 1–22 are cleaved as a signal peptide; that stretch reads MKNLLSLCFLMLAAFTLNPAAA. Cys135 and Cys141 form a disulfide bridge. Residues 161–173 show a composition bias toward polar residues; that stretch reads SAPSSDAAQQTNE. The disordered stretch occupies residues 161 to 180; it reads SAPSSDAAQQTNEGEVKKSE. The next 8 helical transmembrane spans lie at 194–214, 241–261, 273–293, 314–334, 352–372, 387–407, 414–434, and 456–476; these read LLTLIAFFVGGLLLSFTPCVF, FFYVQGMAITYTLLGVVVAMA, IVLIGLSILFIFLALSMFGVF, GGSITGVLMMGVISGLVASPC, VVLGASALYALSLGMGLPLLI, WMNIIKNIFGLLLLAVPVFLL, VASQALWALLILVSASYFYVA, and SLVIFLMLFFGANLAYQLIYP. Cys212 and Cys334 are oxidised to a cystine. The 140-residue stretch at 469–608 folds into the Thioredoxin domain; that stretch reads LAYQLIYPSS…FSAHVKSIFK (140 aa). The cysteines at positions 522 and 525 are disulfide-linked.

Belongs to the thioredoxin family. DsbD subfamily.

The protein localises to the cell inner membrane. The catalysed reaction is [protein]-dithiol + NAD(+) = [protein]-disulfide + NADH + H(+). It catalyses the reaction [protein]-dithiol + NADP(+) = [protein]-disulfide + NADPH + H(+). Required to facilitate the formation of correct disulfide bonds in some periplasmic proteins and for the assembly of the periplasmic c-type cytochromes. Acts by transferring electrons from cytoplasmic thioredoxin to the periplasm. This transfer involves a cascade of disulfide bond formation and reduction steps. This Colwellia psychrerythraea (strain 34H / ATCC BAA-681) (Vibrio psychroerythus) protein is Thiol:disulfide interchange protein DsbD.